Consider the following 232-residue polypeptide: Small ribosomal subunit protein uS3 (232 aa).

The region spanning I39 to R107 is the KH type-2 domain.

The protein belongs to the universal ribosomal protein uS3 family. As to quaternary structure, part of the 30S ribosomal subunit. Forms a tight complex with proteins S10 and S14.

Functionally, binds the lower part of the 30S subunit head. Binds mRNA in the 70S ribosome, positioning it for translation. The sequence is that of Small ribosomal subunit protein uS3 from Rhodopseudomonas palustris (strain BisA53).